Here is a 596-residue protein sequence, read N- to C-terminus: Elongation factor 4 (596 aa).

In terms of domain architecture, tr-type G spans 2 to 184; the sequence is SHIRNFSIIA…RLVHTIPAPE (183 aa). GTP-binding positions include 14-19 and 131-134; these read DHGKST and NKMD.

It belongs to the TRAFAC class translation factor GTPase superfamily. Classic translation factor GTPase family. LepA subfamily.

It localises to the cell inner membrane. The enzyme catalyses GTP + H2O = GDP + phosphate + H(+). Required for accurate and efficient protein synthesis under certain stress conditions. May act as a fidelity factor of the translation reaction, by catalyzing a one-codon backward translocation of tRNAs on improperly translocated ribosomes. Back-translocation proceeds from a post-translocation (POST) complex to a pre-translocation (PRE) complex, thus giving elongation factor G a second chance to translocate the tRNAs correctly. Binds to ribosomes in a GTP-dependent manner. The sequence is that of Elongation factor 4 from Pseudomonas putida (strain GB-1).